We begin with the raw amino-acid sequence, 301 residues long: CRISPR-associated endonuclease Cas1 (301 aa).

Glutamate 133, histidine 200, and aspartate 213 together coordinate Mn(2+).

Belongs to the CRISPR-associated endonuclease Cas1 family. In terms of assembly, homodimer, forms a heterotetramer with a Cas2 homodimer. The cofactor is Mg(2+). Mn(2+) serves as cofactor.

In terms of biological role, CRISPR (clustered regularly interspaced short palindromic repeat), is an adaptive immune system that provides protection against mobile genetic elements (viruses, transposable elements and conjugative plasmids). CRISPR clusters contain spacers, sequences complementary to antecedent mobile elements, and target invading nucleic acids. CRISPR clusters are transcribed and processed into CRISPR RNA (crRNA). Acts as a dsDNA endonuclease. Involved in the integration of spacer DNA into the CRISPR cassette. The protein is CRISPR-associated endonuclease Cas1 of Clostridium sp. (strain SY8519).